We begin with the raw amino-acid sequence, 1303 residues long: MATPEKWRKYLEDYIPCSFPTFLDNEGADSKSFASVLVRLEHPYGRLMSFSNNCGVDVAVVLNVAWGIVLQAYTGQDATCFAVIAESNLNIRPCRIRFTSDKVVSDILSACQSPCGEKTGDHDIPASHLSQDGGFLASEFFNTCIWGPMQGSQMPSETQAADMNRNALNLFDLVTRVEVDKSITRITLTYKRGLMREHQALAVAKAMERAISEIISGKERLDQFCLLTSEDRRQMSLWNMNLSDNSDARIETLIHEWCRWTPSAVAVCGWDGDFSYKELNELSTGVKHDLRHLGIGPEVFVPILFEKSRWAVIAMLGVMKAGGAFILLDPAHPPKRLRSICDKVSARLVVSSVQQADLAAGLAGHVVIVGGEVATAGMAQHVGEHDDSMDCIAAPHNALYAVFTSGSTGTPKGVVNSHSSFLAAMPVYLKALELDNNSRVFQFASYAFDVTIFDALMTLVAGGCVCVPSNADRSSDLTSAIQHFGTTHLSVTPTVARILDPQDFPSLKTIVLGGELSASDELLKWVNNVRVIRLYGASECTVMSIQCTSGPASSIKTINYETGNCCWVVNPQNHEQLRPLGAVGELLVEGAVVGRGYLDDASQTSETFIEAPAWLQELRQGSSTVYKSGDLVRIAADKSVQFVCRKSTQVKLRGQRIELGEVEHHVRLAIPSATECVVELITNPDASRPPMLMAFVLSDTDASTSSITARRNATSDAVFAEPSASFRSQIASITSKLRDALPSYMVPSVILPLRIMPLTSTDKINRKLLGQLAAALSREDLQLYQAQQTTYRAPSNDIEEAFQRFFAQVLGLSLDQIGADDHFFSLGGDSLTAMRLAAMARKAKFDLTVQNVFDHPELSELARHTKLVADESQEFPPPFTLVAGSKQGIVRDAARQCRLPSRVIEDVYPCTPLQKGLLAETMRDAAAFVAKIEVPLPRDVDLDRLRHAWAAVAKANPILRTRMIFSPSYGMLQVVVREDIPWIESDDVESQELVAVGRSLVQLILRRRPSTALFLHIHHAVYDGYSLPLMFAQLNNAYHGETLAFRPASAFIRYLATMPDATDYWQSMCQGLESPSFPALPHSSHRPHPDSKATHTVCVASPQAREYTPNTHVRLAWAITQAHEQGLLDVFYGTVVSGRNAPVDQIESMLIPTVATVPCRISLDVDSPVRKILHRIQDVATRGIPFEQIGLAEISHLGKDAAHACSFQTLLLMQPTAVEQNENDFFNTSTSDANYRADATYAINLFCTLENQDLSVTALYDGNIVSTDTMQRLLQNLGKSMQEIHAAPRTLIGDILKSLHSRL.

The segment at 256 to 653 (EWCRWTPSAV…CRKSTQVKLR (398 aa)) is adenylation (A) domain. The region spanning 793–869 (APSNDIEEAF…ELARHTKLVA (77 aa)) is the Carrier domain. Ser830 is subject to O-(pantetheine 4'-phosphoryl)serine. The condensation (C) domain stretch occupies residues 905 to 1294 (EDVYPCTPLQ…HAAPRTLIGD (390 aa)).

Belongs to the NRP synthetase family.

It functions in the pathway alkaloid biosynthesis; ergot alkaloid biosynthesis. Its function is as follows. D-lysergyl-peptide-synthetase subunit 2; part of the gene cluster that mediates the biosynthesis of fungal ergot alkaloid. DmaW catalyzes the first step of ergot alkaloid biosynthesis by condensing dimethylallyl diphosphate (DMAP) and tryptophan to form 4-dimethylallyl-L-tryptophan. The second step is catalyzed by the methyltransferase easF that methylates 4-dimethylallyl-L-tryptophan in the presence of S-adenosyl-L-methionine, resulting in the formation of 4-dimethylallyl-L-abrine. The catalase easC and the FAD-dependent oxidoreductase easE then transform 4-dimethylallyl-L-abrine to chanoclavine-I which is further oxidized by easD in the presence of NAD(+), resulting in the formation of chanoclavine-I aldehyde. Agroclavine dehydrogenase easG then mediates the conversion of chanoclavine-I aldehyde to agroclavine via a non-enzymatic adduct reaction: the substrate is an iminium intermediate that is formed spontaneously from chanoclavine-I aldehyde in the presence of glutathione. The presence of easA is not required to complete this reaction. Further conversion of agroclavine to paspalic acid is a two-step process involving oxidation of agroclavine to elymoclavine and of elymoclavine to paspalic acid, the second step being performed by the elymoclavine oxidase cloA. Paspalic acid is then further converted to D-lysergic acid. Ergopeptines are assembled from D-lysergic acid and three different amino acids by the D-lysergyl-peptide-synthetases composed each of a monomudular and a trimodular nonribosomal peptide synthetase subunit. LpsB and lpsC encode the monomodular subunits responsible for D-lysergic acid activation and incorporation into the ergopeptine backbone. LpsA1 and A2 subunits encode the trimodular nonribosomal peptide synthetase assembling the tripeptide portion of ergopeptines. LpsA1 is responsible for formation of the major ergopeptine, ergotamine, and lpsA2 for alpha-ergocryptine, the minor ergopeptine of the total alkaloid mixture elaborated by C.purpurea. D-lysergyl-tripeptides are assembled by the nonribosomal peptide synthetases and released as N-(D-lysergyl-aminoacyl)-lactams. Cyclolization of the D-lysergyl-tripeptides is performed by the Fe(2+)/2-ketoglutarate-dependent dioxygenase easH which introduces a hydroxyl group into N-(D-lysergyl-aminoacyl)-lactam at alpha-C of the aminoacyl residue followed by spontaneous condensation with the terminal lactam carbonyl group. This is D-lysergyl-peptide-synthetase subunit 2 from Claviceps purpurea (strain 20.1) (Ergot fungus).